We begin with the raw amino-acid sequence, 326 residues long: GTPase Obg (326 aa).

Residues 1 to 159 (MKFVDSAKIY…LEIELELKLM (159 aa)) enclose the Obg domain. A disordered region spans residues 119-138 (EGGKGGKGNPHFASSTRQAP). The OBG-type G domain occupies 160–323 (ADVGLVGFPN…LKDELWSRVK (164 aa)). GTP contacts are provided by residues 166-173 (GFPNAGKS), 191-195 (FTTLV), 213-216 (DIPG), 280-283 (TKMD), and 304-306 (SSV). Serine 173 and threonine 193 together coordinate Mg(2+).

This sequence belongs to the TRAFAC class OBG-HflX-like GTPase superfamily. OBG GTPase family. Monomer. Mg(2+) serves as cofactor.

The protein localises to the cytoplasm. An essential GTPase which binds GTP, GDP and possibly (p)ppGpp with moderate affinity, with high nucleotide exchange rates and a fairly low GTP hydrolysis rate. Plays a role in control of the cell cycle, stress response, ribosome biogenesis and in those bacteria that undergo differentiation, in morphogenesis control. The chain is GTPase Obg from Chlorobium phaeobacteroides (strain BS1).